A 264-amino-acid chain; its full sequence is Undecaprenyl-diphosphatase (264 aa).

7 consecutive transmembrane segments (helical) span residues 38–58 (RSDF…VLVF), 75–95 (REYV…GLVV), 106–126 (VSPV…VEAY), 136–156 (VTWT…VFPG), 181–201 (FVFL…FLEM), 217–237 (VAFL…MGYI), and 242–262 (FTAF…WLPS).

The protein belongs to the UppP family.

Its subcellular location is the cell inner membrane. It catalyses the reaction di-trans,octa-cis-undecaprenyl diphosphate + H2O = di-trans,octa-cis-undecaprenyl phosphate + phosphate + H(+). Its function is as follows. Catalyzes the dephosphorylation of undecaprenyl diphosphate (UPP). Confers resistance to bacitracin. In Stenotrophomonas maltophilia (strain R551-3), this protein is Undecaprenyl-diphosphatase.